The sequence spans 354 residues: Photosystem II protein D1 (354 aa).

Position 2 is an N-acetylthreonine (threonine 2). Phosphothreonine is present on threonine 2. The next 3 helical transmembrane spans lie at 29–46 (YIGWFGVLMIPTLLTATS), 118–133 (HFLLGVACYMGREWEL), and 142–156 (WIAVAYSAPVAAATA). Histidine 118 is a binding site for chlorophyll a. Tyrosine 126 serves as a coordination point for pheophytin a. [CaMn4O5] cluster-binding residues include aspartate 170 and glutamate 189. The chain crosses the membrane as a helical span at residues 197–218 (FHMLGVAGVFGGSLFSAMHGSL). Position 198 (histidine 198) interacts with chlorophyll a. Residues histidine 215 and 264-265 (SF) each bind a quinone. Histidine 215 is a binding site for Fe cation. Residue histidine 272 coordinates Fe cation. Residues 274 to 288 (FLAAWPVVGIWFTAL) traverse the membrane as a helical segment. Histidine 332, glutamate 333, aspartate 342, and alanine 344 together coordinate [CaMn4O5] cluster. Positions 345–354 (ASIEAPSLNG) are excised as a propeptide.

This sequence belongs to the reaction center PufL/M/PsbA/D family. As to quaternary structure, PSII is composed of 1 copy each of membrane proteins PsbA, PsbB, PsbC, PsbD, PsbE, PsbF, PsbH, PsbI, PsbJ, PsbK, PsbL, PsbM, PsbT, PsbX, PsbY, PsbZ, Psb30/Ycf12, at least 3 peripheral proteins of the oxygen-evolving complex and a large number of cofactors. It forms dimeric complexes. It depends on The D1/D2 heterodimer binds P680, chlorophylls that are the primary electron donor of PSII, and subsequent electron acceptors. It shares a non-heme iron and each subunit binds pheophytin, quinone, additional chlorophylls, carotenoids and lipids. D1 provides most of the ligands for the Mn4-Ca-O5 cluster of the oxygen-evolving complex (OEC). There is also a Cl(-1) ion associated with D1 and D2, which is required for oxygen evolution. The PSII complex binds additional chlorophylls, carotenoids and specific lipids. as a cofactor. Tyr-161 forms a radical intermediate that is referred to as redox-active TyrZ, YZ or Y-Z. In terms of processing, C-terminally processed by CTPA; processing is essential to allow assembly of the oxygen-evolving complex and thus photosynthetic growth.

Its subcellular location is the plastid. The protein resides in the chloroplast thylakoid membrane. It carries out the reaction 2 a plastoquinone + 4 hnu + 2 H2O = 2 a plastoquinol + O2. In terms of biological role, photosystem II (PSII) is a light-driven water:plastoquinone oxidoreductase that uses light energy to abstract electrons from H(2)O, generating O(2) and a proton gradient subsequently used for ATP formation. It consists of a core antenna complex that captures photons, and an electron transfer chain that converts photonic excitation into a charge separation. The D1/D2 (PsbA/PsbD) reaction center heterodimer binds P680, the primary electron donor of PSII as well as several subsequent electron acceptors. This is Photosystem II protein D1 from Selaginella uncinata (Blue spike-moss).